A 593-amino-acid polypeptide reads, in one-letter code: Copine-5 (593 aa).

In terms of domain architecture, C2 1 spans 2–134; it reads EQPEDMASLS…SSGSRLEKPL (133 aa). S19 carries the phosphoserine modification. Positions 38, 44, 98, 100, 103, 108, and 110 each coordinate Ca(2+). S103 is modified (phosphoserine). Residue S140 is modified to Phosphoserine. Residues 161 to 284 form the C2 2 domain; sequence KCGTIILSAE…ARGQSQFNIY (124 aa). Residues D192, D198, D254, D256, and D262 each contribute to the Ca(2+) site. A VWFA domain is found at 328–554; the sequence is NFTVAIDFTA…DVLAEIPDQL (227 aa). Residues 562–593 are disordered; sequence GIRPRPPPAAPAQSPPQSPAHSPPGSPVHTHI. Residues 565–587 show a composition bias toward pro residues; sequence PRPPPAAPAQSPPQSPAHSPPGS.

Belongs to the copine family. Ca(2+) serves as cofactor. In terms of tissue distribution, expressed in the cerebra and cerebellum of newborn brain. Expressed in the eye, lung and muscles but weakly expressed in the adult brain (at protein level).

Its subcellular location is the perikaryon. It is found in the cell projection. Functionally, probable calcium-dependent phospholipid-binding protein that may play a role in calcium-mediated intracellular processes. Plays a role in dendrite formation by melanocytes. The sequence is that of Copine-5 from Mus musculus (Mouse).